We begin with the raw amino-acid sequence, 245 residues long: MTNLLPEMAEIWQQTLNWQPTDSQQARFQQLYELILEGNRQLNLTRITEPQEFWEKHLWDSLRGVAPQQQLISFLPVGASVIDIGTGAGFPGVPVAIIAPNSTMTLVDSTRKKIAFIESILKELGLTNAKTLVSRAEEIGQQPQHREQYDVALIRAVGTASACAEYTLPLLKLGGLAVIYRGTWTEEETTSLENAVRQLGGTVELIDNFTTPLTNSVRHCLYLRKVAKTPANFPRAVGVPTQKPI.

Residues G85, F90, 108–110 (DST), 136–137 (AE), and R155 contribute to the S-adenosyl-L-methionine site.

The protein belongs to the methyltransferase superfamily. RNA methyltransferase RsmG family.

The protein resides in the cytoplasm. Its function is as follows. Specifically methylates the N7 position of a guanine in 16S rRNA. The polypeptide is Ribosomal RNA small subunit methyltransferase G (Trichormus variabilis (strain ATCC 29413 / PCC 7937) (Anabaena variabilis)).